A 513-amino-acid chain; its full sequence is Type-2 serine--tRNA ligase (513 aa).

Alanine 312 lines the L-serine pocket. A Zn(2+)-binding site is contributed by cysteine 314. Residue arginine 344 participates in L-serine binding. ATP contacts are provided by residues 344–346 (RWE) and 355–356 (RV). 361 to 363 (RVE) contacts L-serine. The Zn(2+) site is built by glutamate 363 and cysteine 467. Arginine 474 serves as a coordination point for ATP.

It belongs to the class-II aminoacyl-tRNA synthetase family. Type-2 seryl-tRNA synthetase subfamily. Homodimer. Zn(2+) is required as a cofactor.

Its subcellular location is the cytoplasm. It carries out the reaction tRNA(Ser) + L-serine + ATP = L-seryl-tRNA(Ser) + AMP + diphosphate + H(+). The catalysed reaction is tRNA(Sec) + L-serine + ATP = L-seryl-tRNA(Sec) + AMP + diphosphate + H(+). It functions in the pathway aminoacyl-tRNA biosynthesis; selenocysteinyl-tRNA(Sec) biosynthesis; L-seryl-tRNA(Sec) from L-serine and tRNA(Sec): step 1/1. Functionally, catalyzes the attachment of serine to tRNA(Ser). Is also able to aminoacylate tRNA(Sec) with serine, to form the misacylated tRNA L-seryl-tRNA(Sec), which will be further converted into selenocysteinyl-tRNA(Sec). This Methanothermobacter thermautotrophicus (strain ATCC 29096 / DSM 1053 / JCM 10044 / NBRC 100330 / Delta H) (Methanobacterium thermoautotrophicum) protein is Type-2 serine--tRNA ligase (serS).